The primary structure comprises 129 residues: Small ribosomal subunit protein uS11 (129 aa).

The protein belongs to the universal ribosomal protein uS11 family. Part of the 30S ribosomal subunit. Interacts with proteins S7 and S18. Binds to IF-3.

Its function is as follows. Located on the platform of the 30S subunit, it bridges several disparate RNA helices of the 16S rRNA. Forms part of the Shine-Dalgarno cleft in the 70S ribosome. This is Small ribosomal subunit protein uS11 from Sphingopyxis alaskensis (strain DSM 13593 / LMG 18877 / RB2256) (Sphingomonas alaskensis).